The chain runs to 431 residues: BEL1-like homeodomain protein 5 (431 aa).

Residues 80–96 form an SR/KY domain region; that stretch reads PIYLKAAQELLNEIVNV. A BELL domain region spans residues 128-199; sequence GVAALQMKKA…AVKDMISLQI (72 aa). Residues 228–290 constitute a DNA-binding region (homeobox); it reads AWRPQRGLPE…NARVRMWKPL (63 aa). Basic and acidic residues predominate over residues 302–312; that stretch reads EESRKGSDRYS. Positions 302-333 are disordered; sequence EESRKGSDRYSTKGSSSKQPYNNTTSNESSNT. Residues 313 to 322 show a composition bias toward polar residues; that stretch reads TKGSSSKQPY. Residues 323–333 are compositionally biased toward low complexity; sequence NNTTSNESSNT.

The protein belongs to the TALE/BELL homeobox family. As to quaternary structure, may form heterodimeric complexes with TALE/KNOX proteins. Interacts with OFP1.

The protein resides in the nucleus. The chain is BEL1-like homeodomain protein 5 (BLH5) from Arabidopsis thaliana (Mouse-ear cress).